Here is a 244-residue protein sequence, read N- to C-terminus: tRNA (guanine-N(1)-)-methyltransferase (244 aa).

S-adenosyl-L-methionine is bound by residues glycine 112 and 131-136 (IGDFIV).

The protein belongs to the RNA methyltransferase TrmD family. In terms of assembly, homodimer.

Its subcellular location is the cytoplasm. It catalyses the reaction guanosine(37) in tRNA + S-adenosyl-L-methionine = N(1)-methylguanosine(37) in tRNA + S-adenosyl-L-homocysteine + H(+). Specifically methylates guanosine-37 in various tRNAs. The protein is tRNA (guanine-N(1)-)-methyltransferase of Clostridium kluyveri (strain NBRC 12016).